The sequence spans 408 residues: Succinylornithine transaminase (408 aa).

Residue Lys-252 is modified to N6-(pyridoxal phosphate)lysine.

It belongs to the class-III pyridoxal-phosphate-dependent aminotransferase family. AstC subfamily. Pyridoxal 5'-phosphate is required as a cofactor.

The enzyme catalyses N(2)-succinyl-L-ornithine + 2-oxoglutarate = N-succinyl-L-glutamate 5-semialdehyde + L-glutamate. It functions in the pathway amino-acid degradation; L-arginine degradation via AST pathway; L-glutamate and succinate from L-arginine: step 3/5. Its function is as follows. Catalyzes the transamination of N(2)-succinylornithine and alpha-ketoglutarate into N(2)-succinylglutamate semialdehyde and glutamate. Can also act as an acetylornithine aminotransferase. The chain is Succinylornithine transaminase from Salmonella choleraesuis (strain SC-B67).